Consider the following 267-residue polypeptide: 2-oxoglutarate synthase subunit KorB (267 aa).

As to quaternary structure, heterotetramer of the KorA, KorB, KorC and KorD subunits.

The catalysed reaction is 2 oxidized [2Fe-2S]-[ferredoxin] + 2-oxoglutarate + CoA = succinyl-CoA + 2 reduced [2Fe-2S]-[ferredoxin] + CO2 + H(+). This chain is 2-oxoglutarate synthase subunit KorB (korB), found in Archaeoglobus fulgidus (strain ATCC 49558 / DSM 4304 / JCM 9628 / NBRC 100126 / VC-16).